The chain runs to 373 residues: Histidinol-phosphate aminotransferase (373 aa).

K233 carries the post-translational modification N6-(pyridoxal phosphate)lysine.

Belongs to the class-II pyridoxal-phosphate-dependent aminotransferase family. Histidinol-phosphate aminotransferase subfamily. As to quaternary structure, homodimer. Pyridoxal 5'-phosphate serves as cofactor.

It catalyses the reaction L-histidinol phosphate + 2-oxoglutarate = 3-(imidazol-4-yl)-2-oxopropyl phosphate + L-glutamate. Its pathway is amino-acid biosynthesis; L-histidine biosynthesis; L-histidine from 5-phospho-alpha-D-ribose 1-diphosphate: step 7/9. This chain is Histidinol-phosphate aminotransferase, found in Nitratidesulfovibrio vulgaris (strain ATCC 29579 / DSM 644 / CCUG 34227 / NCIMB 8303 / VKM B-1760 / Hildenborough) (Desulfovibrio vulgaris).